The chain runs to 144 residues: Protection of telomeres protein 1c (144 aa).

The protein belongs to the telombin family. As to expression, expressed at extremely low levels at the limit of detection.

The protein localises to the nucleus. Its subcellular location is the chromosome. The protein resides in the telomere. Binds specifically single-stranded telomeric DNA with weak affinity. Has probably no function in the regulation of telomere length. The sequence is that of Protection of telomeres protein 1c from Arabidopsis thaliana (Mouse-ear cress).